A 306-amino-acid chain; its full sequence is Recombination-associated protein RdgC (306 aa).

It belongs to the RdgC family.

The protein localises to the cytoplasm. The protein resides in the nucleoid. Its function is as follows. May be involved in recombination. The protein is Recombination-associated protein RdgC of Pseudomonas aeruginosa (strain ATCC 15692 / DSM 22644 / CIP 104116 / JCM 14847 / LMG 12228 / 1C / PRS 101 / PAO1).